The sequence spans 225 residues: Putative adhesin RT0816 (225 aa).

The signal sequence occupies residues 1–22; it reads MKKLLLIAATSATILSSSISFA.

This chain is Putative adhesin RT0816, found in Rickettsia typhi (strain ATCC VR-144 / Wilmington).